Reading from the N-terminus, the 833-residue chain is Protein translocase subunit SecA (833 aa).

ATP is bound by residues Gln-87, 105–109 (GEGKT), and Asp-494. The tract at residues 789-816 (PAAVAYSGGEAEAGPAQPHREDPKVGRN) is disordered. The segment covering 806 to 815 (PHREDPKVGR) has biased composition (basic and acidic residues). Residues Cys-819, Cys-821, Cys-830, and Cys-831 each coordinate Zn(2+).

Belongs to the SecA family. In terms of assembly, monomer and homodimer. Part of the essential Sec protein translocation apparatus which comprises SecA, SecYEG and auxiliary proteins SecDF-YajC and YidC. It depends on Zn(2+) as a cofactor.

The protein resides in the cell inner membrane. Its subcellular location is the cytoplasm. The catalysed reaction is ATP + H2O + cellular proteinSide 1 = ADP + phosphate + cellular proteinSide 2.. Its function is as follows. Part of the Sec protein translocase complex. Interacts with the SecYEG preprotein conducting channel. Has a central role in coupling the hydrolysis of ATP to the transfer of proteins into and across the cell membrane, serving as an ATP-driven molecular motor driving the stepwise translocation of polypeptide chains across the membrane. The sequence is that of Protein translocase subunit SecA from Nitratidesulfovibrio vulgaris (strain ATCC 29579 / DSM 644 / CCUG 34227 / NCIMB 8303 / VKM B-1760 / Hildenborough) (Desulfovibrio vulgaris).